We begin with the raw amino-acid sequence, 383 residues long: uncharacterized protein (383 aa).

Residues 1 to 55 form a disordered region; that stretch reads MSSKLTVNAHYSPLKDEDPLDHIDSQTALDSMETDSTGKSSLYFSKSDDPLSKDI. Residues 13-24 are compositionally biased toward basic and acidic residues; the sequence is PLKDEDPLDHID. Residues 25 to 44 show a composition bias toward polar residues; the sequence is SQTALDSMETDSTGKSSLYF. A compositionally biased stretch (basic and acidic residues) spans 46 to 55; that stretch reads KSDDPLSKDI. The next 10 membrane-spanning stretches (helical) occupy residues 87–107, 112–132, 157–177, 179–199, 205–225, 228–248, 262–282, 299–319, 329–349, and 352–372; these read LTIF…TILN, NIIN…SLMV, FIFV…FVPV, FYQI…FVLL, LFPF…VRFE, VAPI…IESV, LIYI…VASL, FFIV…ATFT, YMIS…AFLG, and LYGN…LYTL.

It belongs to the TPT transporter family.

The protein localises to the membrane. This is an uncharacterized protein from Schizosaccharomyces pombe (strain 972 / ATCC 24843) (Fission yeast).